The sequence spans 296 residues: Aquaporin NIP1-1 (296 aa).

Residue M1 is modified to N-acetylmethionine. Transmembrane regions (helical) follow at residues 57–77 (LIAE…SVVV) and 84–104 (VVTL…LIYS). The short motif at 114 to 116 (NPA) is the NPA 1 element. Helical transmembrane passes span 136-156 (VISQ…LFGL), 180-200 (AFTM…GVAT), and 205-225 (IGEL…LIAA). Residues 233–235 (NPG) carry the NPA 2 motif. The helical transmembrane segment at 249-269 (GIWIYLVAPTLGAIAGAWVYN) threads the bilayer. The residue at position 286 (S286) is a Phosphoserine.

This sequence belongs to the MIP/aquaporin (TC 1.A.8) family. NIP (TC 1.A.8.12) subfamily. In terms of tissue distribution, expressed in roots.

It localises to the membrane. Functionally, water channel probably required to promote glycerol permeability and water transport across cell membranes. In Arabidopsis thaliana (Mouse-ear cress), this protein is Aquaporin NIP1-1 (NIP1-1).